The primary structure comprises 132 residues: Large ribosomal subunit protein bL21 (132 aa).

Positions 104-132 (GKAPSIGPRPPREKKPVVETSAEADDAAA) are disordered.

It belongs to the bacterial ribosomal protein bL21 family. Part of the 50S ribosomal subunit. Contacts protein L20.

Its function is as follows. This protein binds to 23S rRNA in the presence of protein L20. The sequence is that of Large ribosomal subunit protein bL21 from Rhodopseudomonas palustris (strain BisB18).